We begin with the raw amino-acid sequence, 500 residues long: Beta-glucosidase 30 (500 aa).

The signal sequence occupies residues 1-25 (MGIRMGRRLLFTLFLGALFCNGVYA). An a beta-D-glucoside-binding site is contributed by Gln46. 2 N-linked (GlcNAc...) asparagine glycosylation sites follow: Asn63 and Asn114. A beta-D-glucoside-binding positions include His149 and 194-195 (NE). The active-site Proton donor is the Glu195. Cys214 and Cys222 form a disulfide bridge. An a beta-D-glucoside-binding site is contributed by Tyr338. An N-linked (GlcNAc...) asparagine glycan is attached at Asn363. Glu409 lines the a beta-D-glucoside pocket. The active-site Nucleophile is Glu409. N-linked (GlcNAc...) asparagine glycosylation is found at Asn416 and Asn417. A beta-D-glucoside-binding positions include Trp456, 463–464 (EW), and Phe472.

It belongs to the glycosyl hydrolase 1 family.

It carries out the reaction Hydrolysis of terminal, non-reducing beta-D-glucosyl residues with release of beta-D-glucose.. The protein is Beta-glucosidase 30 (BGLU30) of Oryza sativa subsp. japonica (Rice).